The chain runs to 651 residues: Acetyl-coenzyme A synthetase (651 aa).

Residues 189-192, T311, and N335 each bind CoA; that span reads RGGK. ATP contacts are provided by residues 387-389, 411-416, D500, and R515; these read GEP and DTWWQT. S523 lines the CoA pocket. Position 526 (R526) interacts with ATP. Mg(2+) is bound by residues V537, H539, and V542. R586 provides a ligand contact to CoA. The residue at position 611 (K611) is an N6-acetyllysine.

The protein belongs to the ATP-dependent AMP-binding enzyme family. The cofactor is Mg(2+). Acetylated. Deacetylation by the SIR2-homolog deacetylase activates the enzyme.

It carries out the reaction acetate + ATP + CoA = acetyl-CoA + AMP + diphosphate. Catalyzes the conversion of acetate into acetyl-CoA (AcCoA), an essential intermediate at the junction of anabolic and catabolic pathways. AcsA undergoes a two-step reaction. In the first half reaction, AcsA combines acetate with ATP to form acetyl-adenylate (AcAMP) intermediate. In the second half reaction, it can then transfer the acetyl group from AcAMP to the sulfhydryl group of CoA, forming the product AcCoA. The sequence is that of Acetyl-coenzyme A synthetase from Brucella abortus (strain S19).